The primary structure comprises 207 residues: Negative modulator of initiation of replication (207 aa).

The span at Ala-43–Ala-54 shows a compositional bias: polar residues. Positions Ala-43–Glu-63 are disordered.

The protein belongs to the SeqA family. Homodimer. Polymerizes to form helical filaments.

The protein localises to the cytoplasm. Negative regulator of replication initiation, which contributes to regulation of DNA replication and ensures that replication initiation occurs exactly once per chromosome per cell cycle. Binds to pairs of hemimethylated GATC sequences in the oriC region, thus preventing assembly of replication proteins and re-initiation at newly replicated origins. Repression is relieved when the region becomes fully methylated. This Psychromonas ingrahamii (strain DSM 17664 / CCUG 51855 / 37) protein is Negative modulator of initiation of replication.